The sequence spans 73 residues: Conotoxin CnIIIE (73 aa).

Positions 1–19 are cleaved as a signal peptide; sequence MSKLGVLLTICLLLFPLTA. Positions 20–49 are excised as a propeptide; it reads LPMDGDQSVDRPAERMQDDISSEQYPLFNQ. Cystine bridges form between Cys-53–Cys-72, Cys-54–Cys-70, and Cys-60–Cys-73.

It belongs to the conotoxin M superfamily. As to expression, expressed by the venom duct.

Its subcellular location is the secreted. In terms of biological role, shows a paralytic effect in fish. This chain is Conotoxin CnIIIE, found in Conus consors (Singed cone).